Consider the following 168-residue polypeptide: METGPRGCPSGRKESQEICSPGLLVFTGCSEQDANLAKQFWLGASMYPTTESQLVLTRGSSQRLPVARNSKVVLREKSSVQPFPFDQDKDAIIFAKAQRIQESEERAKYLQKAKTRDEILQLLRKQREERISKELISLPYKPKDKVPKSKEVLSESGLRDQEEVKALE.

Residues 142-168 (PKDKVPKSKEVLSESGLRDQEEVKALE) are disordered.

This sequence belongs to the HOATZ family. In terms of tissue distribution, specifically expressed in tissues with motile cilia and flagella, such as brain ependyma, lung, testis, and oviduct but not in whole brain, liver,kidney, spleen, and eyeball.

It is found in the cytoplasm. The protein localises to the cell projection. It localises to the cilium. Functionally, required for motile ciliogenesis and flagellar genesis by mediating the maturation of the glycolytic enzyme ENO4. This Mus musculus (Mouse) protein is Cilia- and flagella-associated protein HOATZ.